Reading from the N-terminus, the 381-residue chain is Creatine kinase M-type (381 aa).

A Phosphagen kinase N-terminal domain is found at 11–98 (KLKFSAEEEF…FDPVIQDRHG (88 aa)). The disordered stretch occupies residues 99-118 (GYKPTDKHRTDLNHENLKGG). Positions 125 to 367 (YVLSSRVRTG…KLMVEMEKKL (243 aa)) constitute a Phosphagen kinase C-terminal domain. Residues 128–132 (SSRVR), H191, R236, R292, 320–325 (RGTGGV), and D335 each bind ATP.

Belongs to the ATP:guanido phosphotransferase family. In terms of assembly, dimer of identical or non-identical chains, which can be either B (brain type) or M (muscle type). With MM being the major form in skeletal muscle and myocardium, MB existing in myocardium, and BB existing in many tissues, especially brain. As to expression, predominantly found in skeletal muscle, but not in the heart.

The protein resides in the cytoplasm. It carries out the reaction creatine + ATP = N-phosphocreatine + ADP + H(+). Functionally, reversibly catalyzes the transfer of phosphate between ATP and various phosphogens (e.g. creatine phosphate). Creatine kinase isoenzymes play a central role in energy transduction in tissues with large, fluctuating energy demands, such as skeletal muscle, heart, brain and spermatozoa. The protein is Creatine kinase M-type of Gallus gallus (Chicken).